A 360-amino-acid chain; its full sequence is 1-deoxy-D-xylulose 5-phosphate reductoisomerase (360 aa).

Ser-7, Gly-8, Ser-9, Ile-10, and Asn-115 together coordinate NADPH. Lys-116 provides a ligand contact to 1-deoxy-D-xylulose 5-phosphate. Residue Glu-117 coordinates NADPH. Asp-135 contributes to the Mn(2+) binding site. 4 residues coordinate 1-deoxy-D-xylulose 5-phosphate: Ser-136, Glu-137, Ser-159, and His-182. Glu-137 provides a ligand contact to Mn(2+). Residue Gly-188 coordinates NADPH. 1-deoxy-D-xylulose 5-phosphate-binding residues include Ser-195, Asn-200, Lys-201, and Glu-204. Glu-204 contacts Mn(2+).

This sequence belongs to the DXR family. Mg(2+) is required as a cofactor. It depends on Mn(2+) as a cofactor.

It carries out the reaction 2-C-methyl-D-erythritol 4-phosphate + NADP(+) = 1-deoxy-D-xylulose 5-phosphate + NADPH + H(+). Its pathway is isoprenoid biosynthesis; isopentenyl diphosphate biosynthesis via DXP pathway; isopentenyl diphosphate from 1-deoxy-D-xylulose 5-phosphate: step 1/6. In terms of biological role, catalyzes the NADPH-dependent rearrangement and reduction of 1-deoxy-D-xylulose-5-phosphate (DXP) to 2-C-methyl-D-erythritol 4-phosphate (MEP). This Campylobacter fetus subsp. fetus (strain 82-40) protein is 1-deoxy-D-xylulose 5-phosphate reductoisomerase.